Consider the following 504-residue polypeptide: Cytochrome P450 2D1 (504 aa).

Cys-446 serves as a coordination point for heme.

Belongs to the cytochrome P450 family. Heme is required as a cofactor.

Its subcellular location is the endoplasmic reticulum membrane. It localises to the microsome membrane. The enzyme catalyses an organic molecule + reduced [NADPH--hemoprotein reductase] + O2 = an alcohol + oxidized [NADPH--hemoprotein reductase] + H2O + H(+). Functionally, cytochromes P450 are a group of heme-thiolate monooxygenases. In liver microsomes, this enzyme is involved in an NADPH-dependent electron transport pathway. It oxidizes a variety of structurally unrelated compounds, including steroids, fatty acids, and xenobiotics. The sequence is that of Cytochrome P450 2D1 (Cyp2d1) from Rattus norvegicus (Rat).